Here is a 36-residue protein sequence, read N- to C-terminus: Photosystem I reaction center subunit VIII (36 aa).

Residues 9–29 traverse the membrane as a helical segment; it reads ILVPLVGLIFPAFSMALFFLY.

Belongs to the PsaI family.

It is found in the plastid. The protein localises to the chloroplast thylakoid membrane. Its function is as follows. May help in the organization of the PsaL subunit. This chain is Photosystem I reaction center subunit VIII, found in Thalassiosira pseudonana (Marine diatom).